A 203-amino-acid polypeptide reads, in one-letter code: Holliday junction branch migration complex subunit RuvA (203 aa).

Residues 1-64 (MIGRLRGIII…EDAQLLYGFN (64 aa)) form a domain I region. The interval 65 to 142 (NKQERTLFKE…KGLHGDLFTP (78 aa)) is domain II. The flexible linker stretch occupies residues 143–154 (AADLVLTSPASP). A domain III region spans residues 155–203 (ATDDAEQEAVAALVALGYKPQEASRMVSKIARPDTSSETLIREALRAAL).

Belongs to the RuvA family. In terms of assembly, homotetramer. Forms an RuvA(8)-RuvB(12)-Holliday junction (HJ) complex. HJ DNA is sandwiched between 2 RuvA tetramers; dsDNA enters through RuvA and exits via RuvB. An RuvB hexamer assembles on each DNA strand where it exits the tetramer. Each RuvB hexamer is contacted by two RuvA subunits (via domain III) on 2 adjacent RuvB subunits; this complex drives branch migration. In the full resolvosome a probable DNA-RuvA(4)-RuvB(12)-RuvC(2) complex forms which resolves the HJ.

It is found in the cytoplasm. Its function is as follows. The RuvA-RuvB-RuvC complex processes Holliday junction (HJ) DNA during genetic recombination and DNA repair, while the RuvA-RuvB complex plays an important role in the rescue of blocked DNA replication forks via replication fork reversal (RFR). RuvA specifically binds to HJ cruciform DNA, conferring on it an open structure. The RuvB hexamer acts as an ATP-dependent pump, pulling dsDNA into and through the RuvAB complex. HJ branch migration allows RuvC to scan DNA until it finds its consensus sequence, where it cleaves and resolves the cruciform DNA. The sequence is that of Holliday junction branch migration complex subunit RuvA from Shigella flexneri serotype 5b (strain 8401).